The following is a 201-amino-acid chain: Protease (201 aa).

Residues His-55, Asp-72, and Cys-122 contribute to the active site.

It belongs to the peptidase C5 family. Interacts with protease cofactor pVI-C; this interaction is necessary for protease activation.

Its subcellular location is the virion. It localises to the host nucleus. The catalysed reaction is Cleaves proteins of the adenovirus and its host cell at two consensus sites: -Yaa-Xaa-Gly-Gly-|-Xaa- and -Yaa-Xaa-Gly-Xaa-|-Gly- (in which Yaa is Met, Ile or Leu, and Xaa is any amino acid).. With respect to regulation, requires DNA and protease cofactor for maximal activation. Inside nascent virions, becomes partially activated by binding to the viral DNA, allowing it to cleave the cofactor that binds to the protease and fully activates it. Actin, like the viral protease cofactor, seems to act as a cofactor in the cleavage of cytokeratin 18 and of actin itself. Cleaves viral precursor proteins (pTP, pIIIa, pVI, pVII, pVIII, and pX) inside newly assembled particles giving rise to mature virions. Protease complexed to its cofactor slides along the viral DNA to specifically locate and cleave the viral precursors. Mature virions have a weakened organization compared to the unmature virions, thereby facilitating subsequent uncoating. Without maturation, the particle lacks infectivity and is unable to uncoat. Late in adenovirus infection, in the cytoplasm, may participate in the cytoskeleton destruction. Cleaves host cell cytoskeletal keratins K7 and K18. This chain is Protease, found in Bovine adenovirus 4 (BAdV-4).